A 354-amino-acid polypeptide reads, in one-letter code: 3'-5' exonuclease (354 aa).

The segment at 1 to 120 (MEKYLIKMPI…PSPEKEKPEK (120 aa)) is disordered. A compositionally biased stretch (basic and acidic residues) spans 36–50 (TKKDTPKELKDKENA). Positions 59–70 (TKGRPGRPAVKR) are enriched in basic residues. Over residues 71 to 91 (KNLDNPDAKAEKKATEEENPP) the composition is skewed to basic and acidic residues. A phosphoserine mark is found at Ser104, Ser110, and Ser112. Positions 146 to 314 (VLQWVEKQKD…GQVIYRELER (169 aa)) constitute a 3'-5' exonuclease domain. 3 residues coordinate Mg(2+): Asp163, Glu165, and Asp301.

This sequence belongs to the WRNexo family.

It is found in the nucleus. Its function is as follows. Has exonuclease activity on both single-stranded and duplex templates bearing overhangs, but not blunt ended duplex DNA, and cleaves in a 3'-5' direction. Essential for the formation of DNA replication focal centers. Has an important role in maintaining genome stability. The polypeptide is 3'-5' exonuclease (Drosophila yakuba (Fruit fly)).